The sequence spans 226 residues: UPF0173 metal-dependent hydrolase Msed_2125 (226 aa).

This sequence belongs to the UPF0173 family.

The protein is UPF0173 metal-dependent hydrolase Msed_2125 of Metallosphaera sedula (strain ATCC 51363 / DSM 5348 / JCM 9185 / NBRC 15509 / TH2).